Reading from the N-terminus, the 473-residue chain is MSGQGPPSNLTPQQQHMIMQQQQQQQMMRQQQIQQQQLHQRQLQQQQAQQSYQRSRTPQMQQHPGGGSPGSHLQMHPHLQSQGHMQPRSPLVGQHHPAPGSIPPGNPATPQMMQQQMGMNQPMSLPAPHVSRPGSVAPPASVPPNMHTGPSSNQMDQMGGQSQYSHHLQPQQPLSRPGSQQSHIAGGHGGPHSVQQPGSVLAPGSIQQPGSLLAPGSMHQPGSVQQPGSLGAPLSHTGAGGPQSVQGYGPGSVQPPGSAQAPSSVQPGSTFAPGSLQAPASQQPPASIQPPPSAASGSVAGPASAAPAKVEPLKPNEEQIRMVQDPVDLVRNLVQKDLRMSVVEMNKRGAELLHQKEEGAIKEEDRQQYKRATNDFHAVCDEIDRTLTTIMETAKQITKLDKVFQDRTSKEIDGEAMVNSVQKFVDETGIVQKMFDDTVNSVTSTMEKMRRRQKKWKDQQQQQENAEDAEMAE.

Positions 1–12 are enriched in polar residues; sequence MSGQGPPSNLTP. Disordered stretches follow at residues 1–319 and 444–473; these read MSGQ…NEEQ and STME…EMAE. Residues 13–50 are compositionally biased toward low complexity; that stretch reads QQQHMIMQQQQQQQMMRQQQIQQQQLHQRQLQQQQAQQ. Over residues 51–62 the composition is skewed to polar residues; sequence SYQRSRTPQMQQ. Low complexity-rich tracts occupy residues 111 to 123 and 130 to 139; these read QMMQ…NQPM and VSRPGSVAPP. Composition is skewed to polar residues over residues 148–183 and 255–269; these read TGPS…QQSH and PPGS…QPGS. Composition is skewed to low complexity over residues 272–286 and 294–308; these read APGS…QPPA and AASG…AAPA.

It belongs to the Mediator complex subunit 29 family. As to quaternary structure, component of the Mediator complex.

The protein resides in the nucleus. Functionally, component of the Mediator complex, a coactivator involved in the regulated transcription of nearly all RNA polymerase II-dependent genes. Mediator functions as a bridge to convey information from gene-specific regulatory proteins to the basal RNA polymerase II transcription machinery. Mediator is recruited to promoters by direct interactions with regulatory proteins and serves as a scaffold for the assembly of a functional preinitiation complex with RNA polymerase II and the general transcription factors. The polypeptide is Mediator of RNA polymerase II transcription subunit 29 (mdt-29) (Caenorhabditis briggsae).